Reading from the N-terminus, the 549-residue chain is MKNINPTQTSAWQALQKHFDEMKDVSLADLFAKDGDRFSKFSATFDDQMLVDFSKNRITEETLAKLQDLAKETDLAGAIKSMFSGEKINRTEDRAVLHVALRNRSNTPIMVDGKDVMPEVNAVLEKMKTFSEEIISGSWKGYTGKAITDVVNIGIGGSDLGPFMVTEALRPYKNHLNMHFVSNVDGTHIAEVLKKVNPETTLFLVASKTFTTQETMTNAHSARDWFLATAGDNKHVAKHFAALSTNGKAVGEFGIDTANMFEFWDWVGGRYSLWSAIGLSIILSVGYDNFVELLSGAHAMDKHFANTAPEKNLPVLLALIGIWYNNFFGAETEAILPYDQYMHRFAAYFQQGNMESNGKYVDRNGNAVDYQTGPIIWGEPGTNGQHAFYQLIHQGTKMVPCDFIAPATTHNALSDHHQKLLSNFFAQTEALAFGKARDVVEQEYRDLGKDPATLENVVPFKVFEGNRPTNSILLREITPFSLGALIALYEHKIFTQGAILNIFTFDQWGVELGKQLANRILPELGDDKDINSHDSSTNGLINRYKSWRA.

The active-site Proton donor is the Glu-355. Residues His-386 and Lys-514 contribute to the active site.

This sequence belongs to the GPI family.

It localises to the cytoplasm. It catalyses the reaction alpha-D-glucose 6-phosphate = beta-D-fructose 6-phosphate. It functions in the pathway carbohydrate biosynthesis; gluconeogenesis. The protein operates within carbohydrate degradation; glycolysis; D-glyceraldehyde 3-phosphate and glycerone phosphate from D-glucose: step 2/4. Catalyzes the reversible isomerization of glucose-6-phosphate to fructose-6-phosphate. In Enterobacter sp. (strain 638), this protein is Glucose-6-phosphate isomerase.